The sequence spans 288 residues: Transmembrane and coiled-coil domain-containing protein 5A (288 aa).

Positions 10–192 form a coiled coil; the sequence is KRNIISLNMD…ALFLEREVSK (183 aa). Residues 224–244 traverse the membrane as a helical segment; it reads IFCCLFFITLFFIRLLSYMFF.

The protein belongs to the TMCO5 family.

The protein resides in the endoplasmic reticulum membrane. It is found in the nucleus membrane. The chain is Transmembrane and coiled-coil domain-containing protein 5A (TMCO5A) from Homo sapiens (Human).